Here is a 48-residue protein sequence, read N- to C-terminus: MKEIEFEEVKKFVEVMSRRLRSTKVIKIHISYAEWLVAEVERLRGLVK.

This chain is SPbeta prophage-derived uncharacterized protein YotE (yotE), found in Bacillus subtilis (strain 168).